We begin with the raw amino-acid sequence, 383 residues long: 8-amino-7-oxononanoate synthase (383 aa).

Substrate is bound at residue R23. 110-111 (GF) contacts pyridoxal 5'-phosphate. H135 is a binding site for substrate. Pyridoxal 5'-phosphate contacts are provided by S181, H209, and T235. At K238 the chain carries N6-(pyridoxal phosphate)lysine. T351 is a binding site for substrate.

It belongs to the class-II pyridoxal-phosphate-dependent aminotransferase family. BioF subfamily. As to quaternary structure, homodimer. It depends on pyridoxal 5'-phosphate as a cofactor.

It carries out the reaction 6-carboxyhexanoyl-[ACP] + L-alanine + H(+) = (8S)-8-amino-7-oxononanoate + holo-[ACP] + CO2. It participates in cofactor biosynthesis; biotin biosynthesis. Catalyzes the decarboxylative condensation of pimeloyl-[acyl-carrier protein] and L-alanine to produce 8-amino-7-oxononanoate (AON), [acyl-carrier protein], and carbon dioxide. This Aliivibrio salmonicida (strain LFI1238) (Vibrio salmonicida (strain LFI1238)) protein is 8-amino-7-oxononanoate synthase.